The following is a 964-amino-acid chain: Cycloisomaltooligosaccharide glucanotransferase (964 aa).

A signal peptide spans 1–30; that stretch reads MRVKILPLVFMTLLLIVPSQMLLPSGQANA. 2 consecutive CBM6 domains span residues 413–538 and 740–863; these read DRYE…LTLG and NMYE…LKLD.

This sequence belongs to the glycosyl hydrolase 66 family.

It catalyses the reaction cyclizes part of a (1-&gt;6)-alpha-D-glucan chain by formation of a (1-&gt;6)-alpha-D-glucosidic bond.. Functionally, produces cycloisomaltooligosaccharide from dextran. The polypeptide is Cycloisomaltooligosaccharide glucanotransferase (cit) (Niallia circulans (Bacillus circulans)).